We begin with the raw amino-acid sequence, 451 residues long: Tubulin gamma-1 chain (451 aa).

Serine 131 is subject to Phosphoserine; by BRSK1. Residue 142–148 (AGGTGSG) participates in GTP binding.

Belongs to the tubulin family. Component of the gamma-tubulin ring complex (gTuRC) consisting of TUBGCP2, TUBGCP3, TUBGCP4, TUBGCP5 and TUBGCP6 and gamma-tubulin TUBG1 or TUBG2. TUBGCP2, TUBGCP3, TUBGCP4, TUBGCP5 and TUBGCP6 assemble in a 5:5:2:1:1 stoichiometry; each is associated with a gamma-tubulin, thereby arranging 14 gamma-tubulins in a helical manner. Gamma-tubulin at the first position is blocked by TUBGCP3 at the last position, allowing 13 protafilaments to grow into a microtubule. The gTuRC (via TUBGCP3 and TUBGCP6) interacts with ACTB and MZT1; the interactions form a luminal bridge that stabilizes the initial structure during complex assembly. The gTuRC (via TUBGCP2) interacts with MZT2A/MZT2B and CDK5RAP2 (via CM1 motif); the interactions play a role in gTuRC activation. Interacts with alpha-beta tubulin heterodimers; the interaction allows microtubules to nucleate from the gTuRC. Interacts with B9D2. Interacts with CDK5RAP2; the interaction is leading to centrosomal localization of TUBG1 and CDK5RAP2. Interacts with CIMAP3. Interacts with SAS6 and NUP62 at the centrosome. Interacts with EML3 (phosphorylated at 'Thr-881') and HAUS8. Interacts with DNM2; this interaction may participate in centrosome cohesion. Interacts with CCDC66. Phosphorylation at Ser-131 by BRSK1 regulates centrosome duplication, possibly by mediating relocation of gamma-tubulin and its associated proteins from the cytoplasm to the centrosome.

Its subcellular location is the cytoplasm. It localises to the cytoskeleton. The protein resides in the microtubule organizing center. It is found in the centrosome. The protein localises to the spindle. In terms of biological role, tubulin is the major constituent of microtubules, protein filaments consisting of alpha- and beta-tubulin heterodimers. Gamma-tubulin is a key component of the gamma-tubulin ring complex (gTuRC) which mediates microtubule nucleation. The gTuRC regulates the minus-end nucleation of alpha-beta tubulin heterodimers that grow into microtubule protafilaments, a critical step in centrosome duplication and spindle formation. This chain is Tubulin gamma-1 chain, found in Mus musculus (Mouse).